Reading from the N-terminus, the 437-residue chain is GTPase Obg (437 aa).

The Obg domain maps to 2–160 (SMFLDTAKIK…RNLELELKVL (159 aa)). The OBG-type G domain occupies 161-338 (ADVGLVGFPS…LLEATAELLE (178 aa)). Residues 167–174 (GFPSVGKS), 192–196 (FTTIV), 214–217 (DLPG), 284–287 (NKMD), and 319–321 (SGI) contribute to the GTP site. Residues Ser174 and Thr194 each coordinate Mg(2+). The 79-residue stretch at 359–437 (GFNPDEPEFA…IGKFEFEFVD (79 aa)) folds into the OCT domain.

Belongs to the TRAFAC class OBG-HflX-like GTPase superfamily. OBG GTPase family. Monomer. The cofactor is Mg(2+).

It is found in the cytoplasm. Its function is as follows. An essential GTPase which binds GTP, GDP and possibly (p)ppGpp with moderate affinity, with high nucleotide exchange rates and a fairly low GTP hydrolysis rate. Plays a role in control of the cell cycle, stress response, ribosome biogenesis and in those bacteria that undergo differentiation, in morphogenesis control. This is GTPase Obg from Streptococcus suis (strain 05ZYH33).